The following is a 186-amino-acid chain: Myosin light chain 1, skeletal muscle isoform (186 aa).

A Blocked amino end (Met) modification is found at Met1. The interval 1–26 (MPKAPAKKAEPAPAPAPAPEPAPAPA) is disordered. A compositionally biased stretch (pro residues) spans 12–26 (APAPAPAPEPAPAPA). EF-hand domains lie at 42 to 77 (DQIE…LGQN) and 119 to 154 (AGFE…LGEK).

As to quaternary structure, myosin is a hexamer of 2 heavy chains and 4 light chains.

The chain is Myosin light chain 1, skeletal muscle isoform from Chelon ramada (Thin-lipped grey mullet).